Consider the following 30-residue polypeptide: Toxic protein AapA1 (30 aa).

This sequence belongs to the AapA toxin family.

It localises to the cell inner membrane. With respect to regulation, transcription of the aapA1 gene generates a full-length transcript whose folding impedes translation. Processing of the 3' end of the aapA1 message generates a shorter transcript that becomes translatable after a structural rearrangement. The processing also makes it more susceptible to forming dsRNA with IsoA1 which leads to duplex RNA degradation by RNase 3 (rnc). May be involved in response to oxidative stress. Toxic component of a type I toxin-antitoxin (TA) system. When overexpression is induced in situ in the absence of its cognate antisense RNA antitoxin IsoA1 it leads to cell growth arrest and cell death without lysis. Neutralized by IsoA1 RNA which forms an extensive duplex with the mRNA. Binds artificial prokaryotic and eukaryotic lipid membranes, with 30-fold higher affinity for prokaryotic membranes. Molecular dynamics suggests the peptide penetrates the membrane leading to lipid reorganization and thinning of the bilayer. Induction of toxin in the absence of antitoxin RNA causes a fast conversion of cells from spiral-shaped to coccoid forms; cells have no visible membrane defects and resemble wild-type 'aging coccoids'. Toxin causes a moderate decrease in membrane potential and ATP content and alterations in peptidoglycan muropeptide abundance; GlcNAc-MurNAc dipeptides increase while GlcNAc-MurNAc tripeptides decrease (i.e. a faster phenocopy of cell aging). Deletion of all 6 AapA/IsoA TA loci in strain B128 leads to slower than wild-type conversion of H2O2-treated cells to the coccoid form. This suggests oxidative stress triggers coccoid transformation via these type I TA systems, although other factors eventually drive the morphology change. The chain is Toxic protein AapA1 from Helicobacter pylori (strain ATCC 700392 / 26695) (Campylobacter pylori).